The chain runs to 256 residues: Lysine-rich coiled-coil protein 1 (256 aa).

Disordered stretches follow at residues 62–84 (RLPS…EDRV) and 144–256 (TIDP…ILGF). Positions 64–79 (PSGTNHSYPRSCSSSQ) are enriched in polar residues. Basic and acidic residues-rich tracts occupy residues 161 to 188 (HVEE…DLNK) and 218 to 227 (KTRDVSSKKE). Positions 209-247 (EKLKNRKEKKTRDVSSKKEDRKRRKEKKEQGEERTEEEM) form a coiled coil.

This Mus musculus (Mouse) protein is Lysine-rich coiled-coil protein 1 (Krcc1).